The primary structure comprises 250 residues: Golgi SNAP receptor complex member 1 (250 aa).

N-acetylalanine is present on A2. Over A2–D229 the chain is Cytoplasmic. The stretch at W9–F30 forms a coiled coil. Residues S38 to N59 form a disordered region. The segment covering S41–S51 has biased composition (basic and acidic residues). A coiled-coil region spans residues E68–A95. S141 bears the Phosphoserine mark. The helical; Anchor for type IV membrane protein transmembrane segment at S230–H250 threads the bilayer.

Belongs to the GOSR1 family. In terms of assembly, component of several multiprotein Golgi SNARE complexes. Identified in a SNARE complex with BET1, STX5 and YKT6, in a SNARE complex with BET1L, STX5 and YKT6, in a SNARE complex with STX5, GOSR2, SEC22B and BET1, and in complex with STX5 and COG3. Interacts with GABARAPL2.

The protein resides in the golgi apparatus membrane. Functionally, involved in transport from the ER to the Golgi apparatus as well as in intra-Golgi transport. It belongs to a super-family of proteins called t-SNAREs or soluble NSF (N-ethylmaleimide-sensitive factor) attachment protein receptor. May play a protective role against hydrogen peroxide induced cytotoxicity under glutathione depleted conditions in neuronal cells by regulating the intracellular ROS levels via inhibition of p38 MAPK (MAPK11, MAPK12, MAPK13 and MAPK14). Participates in docking and fusion stage of ER to cis-Golgi transport. Plays an important physiological role in VLDL-transport vesicle-Golgi fusion and thus in VLDL delivery to the hepatic cis-Golgi. This Homo sapiens (Human) protein is Golgi SNAP receptor complex member 1 (GOSR1).